The sequence spans 78 residues: uncharacterized protein (78 aa).

The next 2 helical transmembrane spans lie at 7–27 (ICLV…FFQF) and 41–61 (LSRI…GLLF).

The protein resides in the cell membrane. This is an uncharacterized protein from Bacillus subtilis (strain 168).